Reading from the N-terminus, the 229-residue chain is NAD(P)H-hydrate epimerase (229 aa).

The YjeF N-terminal domain occupies Ala-10–Leu-217. Asn-60–Asp-64 provides a ligand contact to (6S)-NADPHX. K(+)-binding residues include Asn-61 and Asp-125. Residues Gly-129–Pro-135 and Asp-158 each bind (6S)-NADPHX. Ser-161 lines the K(+) pocket.

Belongs to the NnrE/AIBP family. The cofactor is K(+).

The catalysed reaction is (6R)-NADHX = (6S)-NADHX. It catalyses the reaction (6R)-NADPHX = (6S)-NADPHX. In terms of biological role, catalyzes the epimerization of the S- and R-forms of NAD(P)HX, a damaged form of NAD(P)H that is a result of enzymatic or heat-dependent hydration. This is a prerequisite for the S-specific NAD(P)H-hydrate dehydratase to allow the repair of both epimers of NAD(P)HX. The sequence is that of NAD(P)H-hydrate epimerase from Drosophila ananassae (Fruit fly).